A 537-amino-acid polypeptide reads, in one-letter code: Phosphoenolpyruvate carboxykinase (ATP) (537 aa).

Residues R61, Y195, and K201 each coordinate substrate. Residues K201, H220, and 236-244 (GLSGTGKTT) each bind ATP. Positions 201 and 220 each coordinate Mn(2+). D257 is a binding site for Mn(2+). E285, R323, and T448 together coordinate ATP. R323 contacts substrate.

The protein belongs to the phosphoenolpyruvate carboxykinase (ATP) family. Mn(2+) is required as a cofactor.

It is found in the cytoplasm. It carries out the reaction oxaloacetate + ATP = phosphoenolpyruvate + ADP + CO2. Its pathway is carbohydrate biosynthesis; gluconeogenesis. Its function is as follows. Involved in the gluconeogenesis. Catalyzes the conversion of oxaloacetate (OAA) to phosphoenolpyruvate (PEP) through direct phosphoryl transfer between the nucleoside triphosphate and OAA. This Rhodopseudomonas palustris (strain ATCC BAA-98 / CGA009) protein is Phosphoenolpyruvate carboxykinase (ATP).